Consider the following 276-residue polypeptide: 2-dehydro-3-deoxyphosphooctonate aldolase (276 aa).

This sequence belongs to the KdsA family.

Its subcellular location is the cytoplasm. The catalysed reaction is D-arabinose 5-phosphate + phosphoenolpyruvate + H2O = 3-deoxy-alpha-D-manno-2-octulosonate-8-phosphate + phosphate. It functions in the pathway carbohydrate biosynthesis; 3-deoxy-D-manno-octulosonate biosynthesis; 3-deoxy-D-manno-octulosonate from D-ribulose 5-phosphate: step 2/3. Its pathway is bacterial outer membrane biogenesis; lipopolysaccharide biosynthesis. The protein is 2-dehydro-3-deoxyphosphooctonate aldolase of Xanthomonas oryzae pv. oryzae (strain MAFF 311018).